Consider the following 132-residue polypeptide: MSMQDTVGDMLTRIRNAQMANKVSVAMPNSKLRKSIADLLVNEGYVASAVVTEENNNKATLTIVLKYFEGKAVIETIQRFSRPGLRQHRGKDAIPTVKQGMGVAIVSTSQGIMTDRAARAAGIGGEVVAFVA.

Belongs to the universal ribosomal protein uS8 family. Part of the 30S ribosomal subunit. Contacts proteins S5 and S12.

One of the primary rRNA binding proteins, it binds directly to 16S rRNA central domain where it helps coordinate assembly of the platform of the 30S subunit. This Psychrobacter cryohalolentis (strain ATCC BAA-1226 / DSM 17306 / VKM B-2378 / K5) protein is Small ribosomal subunit protein uS8.